We begin with the raw amino-acid sequence, 934 residues long: Complement component C6 (934 aa).

An N-terminal signal peptide occupies residues 1–21 (MARRSVLYFILLNALINKGQA). Intrachain disulfides connect C22–C61, C24–C65, C35–C73, C39–C78, C82–C117, C93–C127, C96–C133, C140–C151, C146–C164, C158–C173, and C180–C218. TSP type-1 domains lie at 22–79 (CFCD…QRCP) and 81–134 (NCLL…KLCK). W29 is a glycosylation site (C-linked (Man) tryptophan). C-linked (Man) tryptophan; partial glycosylation occurs at W32. The O-linked (Fuc...) threonine glycan is linked to T38. W90 is a glycosylation site (C-linked (Man) tryptophan; partial). The LDL-receptor class A domain occupies 138-175 (ADCKNKFRCDSGRCIARKLECNGENDCGDNSDERDCGR). Residues L156, N159, E161, D163, D169, and E170 each coordinate Ca(2+). The MACPF domain occupies 176-522 (TKAVCTRKYN…EYAAKFDPCQ (347 aa)). The chain crosses the membrane as a beta stranded span at residues 278 to 290 (SFSVPIFYSSKRS). The N-linked (GlcNAc...) asparagine glycan is linked to N324. T392 is a glycosylation site (O-linked (Fuc...) threonine). Cystine bridges form between C399-C420, C499-C623, C521-C570, C523-C539, C526-C541, C543-C552, C577-C611, C589-C601, C644-C686, C672-C699, C704-C746, C732-C761, C773-C823, C784-C801, C786-C837, and C793-C816. The beta stranded transmembrane segment at 402-415 (IETKKRVLFAKKTK) threads the bilayer. An EGF-like domain is found at 523–553 (CAPCPNNGRPTLSGTECLCVCQSGTYGENCE). The 48-residue stretch at 565–612 (DGQWGCWSSWSTCDATYKRSRTRECNNPAPQRGGKRCEGEKRQEEDCT) folds into the TSP type-1 3 domain. C-linked (Man) tryptophan; partial glycosylation is found at W568, W571, and W574. 2 CCP regions span residues 611 to 688 (CTFS…RCLP) and 689 to 765 (DGTW…EKDT). 2 consecutive Sushi domains span residues 642–701 (SGCP…ECQR) and 702–763 (TECI…TCEK). Positions 642-934 (SGCPQPVPPE…EILHPGKCLA (293 aa)) are C5b-binding domain. The tract at residues 766–840 (LTKLKGHCQL…FLHIGSCQDG (75 aa)) is factor I module (FIM) 1. Residues 780–839 (SGSECICMSPEEDCSHHSEDLCVFDTDSNDYFTSPACKFLAEKCLNNQQLHFLHIGSCQD) enclose the Kazal-like 1 domain. N-linked (GlcNAc...) asparagine glycosylation occurs at N855. A factor I module (FIM) 2 region spans residues 858-934 (KKESCGYDTC…EILHPGKCLA (77 aa)). Intrachain disulfides connect C862-C873, C867-C919, C880-C897, C882-C932, and C888-C912. Residues 876–934 (STSKCVCLLPPQCFKGGNQLYCVKMGSSTSEKTLNICEVGTIRCANRKMEILHPGKCLA) enclose the Kazal-like 2 domain.

This sequence belongs to the complement C6/C7/C8/C9 family. Component of the membrane attack complex (MAC), composed of complement C5b, C6, C7, C8A, C8B, C8G and multiple copies of the pore-forming subunit C9. All cysteine residues are assumed to be cross-linked to one another. Individual modules containing an even number of conserved cysteine residues are supposed to have disulfide linkages only within the same module.

The protein resides in the secreted. The protein localises to the target cell membrane. Membrane attack complex (MAC) assembly is inhibited by CD59, thereby protecting self-cells from damage during complement activation. MAC assembly is also inhibited by clusterin (CLU) chaperones that inhibit polymerization of C9. Component of the membrane attack complex (MAC), a multiprotein complex activated by the complement cascade, which inserts into a target cell membrane and forms a pore, leading to target cell membrane rupture and cell lysis. The MAC is initiated by proteolytic cleavage of C5 into complement C5b in response to the classical, alternative, lectin and GZMK complement pathways. The complement pathways consist in a cascade of proteins that leads to phagocytosis and breakdown of pathogens and signaling that strengthens the adaptive immune system. Together with component C5b, involved in MAC complex assembly: complement C5b and C6 associate with the outer leaflet of target cell membrane, reducing the energy for membrane bending. This is Complement component C6 from Homo sapiens (Human).